The chain runs to 394 residues: Ribose-phosphate pyrophosphokinase 5, chloroplastic (394 aa).

The N-terminal 33 residues, 1-33 (MASIVQPSPTFPALNLRRSSLIRPPSSVRFPLK), are a transit peptide targeting the chloroplast. Positions 202, 204, 213, and 217 each coordinate Mg(2+). Residues 288–303 (GKVAIMVDDMIDTAGT) form a binding of phosphoribosylpyrophosphate region.

Belongs to the ribose-phosphate pyrophosphokinase family.

Its subcellular location is the plastid. It is found in the chloroplast. The enzyme catalyses D-ribose 5-phosphate + ATP = 5-phospho-alpha-D-ribose 1-diphosphate + AMP + H(+). This is Ribose-phosphate pyrophosphokinase 5, chloroplastic (PRS5) from Arabidopsis thaliana (Mouse-ear cress).